The primary structure comprises 78 residues: Small ribosomal subunit protein bS16c (78 aa).

This sequence belongs to the bacterial ribosomal protein bS16 family.

Its subcellular location is the plastid. The protein localises to the chloroplast. The sequence is that of Small ribosomal subunit protein bS16c from Daucus carota (Wild carrot).